The sequence spans 174 residues: RNA pyrophosphohydrolase (174 aa).

The 154-residue stretch at 14 to 167 (PYRPCVGLMV…KRKVYEEVVA (154 aa)) folds into the Nudix hydrolase domain. A Nudix box motif is present at residues 55-76 (GGIDKGEEPLEAAIRELYEETG).

This sequence belongs to the Nudix hydrolase family. RppH subfamily. Requires a divalent metal cation as cofactor.

Accelerates the degradation of transcripts by removing pyrophosphate from the 5'-end of triphosphorylated RNA, leading to a more labile monophosphorylated state that can stimulate subsequent ribonuclease cleavage. The sequence is that of RNA pyrophosphohydrolase from Brucella anthropi (strain ATCC 49188 / DSM 6882 / CCUG 24695 / JCM 21032 / LMG 3331 / NBRC 15819 / NCTC 12168 / Alc 37) (Ochrobactrum anthropi).